Consider the following 310-residue polypeptide: Porphobilinogen deaminase (310 aa).

C242 is subject to S-(dipyrrolylmethanemethyl)cysteine.

It belongs to the HMBS family. Monomer. It depends on dipyrromethane as a cofactor.

The catalysed reaction is 4 porphobilinogen + H2O = hydroxymethylbilane + 4 NH4(+). It participates in porphyrin-containing compound metabolism; protoporphyrin-IX biosynthesis; coproporphyrinogen-III from 5-aminolevulinate: step 2/4. Functionally, tetrapolymerization of the monopyrrole PBG into the hydroxymethylbilane pre-uroporphyrinogen in several discrete steps. This Shewanella pealeana (strain ATCC 700345 / ANG-SQ1) protein is Porphobilinogen deaminase.